The primary structure comprises 720 residues: Nucleolar protein 11 (720 aa).

The segment at 365–392 (KDPETKPSNAGAQKKTRERKTNANAGNG) is disordered.

The protein localises to the nucleus. It localises to the nucleolus. Functionally, ribosome biogenesis factor. May be required for both optimal rDNA transcription and pre-rRNA processing. The sequence is that of Nucleolar protein 11 (nol11) from Xenopus laevis (African clawed frog).